The chain runs to 498 residues: Transcription factor kayak (498 aa).

Positions 108–127 (ASLGQGSESEDSNASYNDTQ) are enriched in polar residues. Disordered regions lie at residues 108-144 (ASLG…HTDS) and 177-234 (GSAS…KRRV). Composition is skewed to low complexity over residues 135-144 (TDTSSAHTDS) and 177-191 (GSAS…TSNT). Residues 212 to 275 (EQKRAVRRER…KQLEYLLATH (64 aa)) enclose the bZIP domain. Residues 214-233 (KRAVRRERNKQAAARCRKRR) are basic motif. The leucine-zipper stretch occupies residues 240-247 (LTEEVEQL). Residues 304–325 (AGSSGSGASSHHNHNSNDSSNG) are compositionally biased toward low complexity. Disordered stretches follow at residues 304 to 345 (AGSS…SPLD) and 465 to 498 (TPVS…LVSL). Residues 333 to 343 (TLNSTGRSNSP) show a composition bias toward polar residues. The residue at position 342 (S342) is a Phosphoserine.

It belongs to the bZIP family. Fos subfamily. In terms of assembly, homodimer. Heterodimer with Jra. The kay-Jra heterodimer binds more stably to the AP-1 site than either of the two proteins alone.

The protein resides in the nucleus. Developmentally regulated transcription factor AP-1 binds and recognizes the enhancer DNA sequence: 5'-TGA[CG]TCA-3'. May play a role in the function or determination of a particular subset of cells in the developing embryo. It is able to carry out its function either independently of or in conjunction with Jra. The polypeptide is Transcription factor kayak (Drosophila simulans (Fruit fly)).